We begin with the raw amino-acid sequence, 282 residues long: Biotin synthase (282 aa).

The Radical SAM core domain maps to 1 to 228 (MQEIFLCSIS…NARLMVAGGR (228 aa)). Residues Cys17, Cys21, and Cys24 each contribute to the [4Fe-4S] cluster site. Positions 61, 96, 154, and 221 each coordinate [2Fe-2S] cluster.

It belongs to the radical SAM superfamily. Biotin synthase family. Homodimer. It depends on [4Fe-4S] cluster as a cofactor. [2Fe-2S] cluster is required as a cofactor.

The enzyme catalyses (4R,5S)-dethiobiotin + (sulfur carrier)-SH + 2 reduced [2Fe-2S]-[ferredoxin] + 2 S-adenosyl-L-methionine = (sulfur carrier)-H + biotin + 2 5'-deoxyadenosine + 2 L-methionine + 2 oxidized [2Fe-2S]-[ferredoxin]. The protein operates within cofactor biosynthesis; biotin biosynthesis; biotin from 7,8-diaminononanoate: step 2/2. Catalyzes the conversion of dethiobiotin (DTB) to biotin by the insertion of a sulfur atom into dethiobiotin via a radical-based mechanism. In Helicobacter pylori (strain Shi470), this protein is Biotin synthase.